Here is a 161-residue protein sequence, read N- to C-terminus: SsrA-binding protein (161 aa).

A disordered region spans residues 140 to 161 (KRESIKERDWKRDKQRLLKDRG).

The protein belongs to the SmpB family.

Its subcellular location is the cytoplasm. Its function is as follows. Required for rescue of stalled ribosomes mediated by trans-translation. Binds to transfer-messenger RNA (tmRNA), required for stable association of tmRNA with ribosomes. tmRNA and SmpB together mimic tRNA shape, replacing the anticodon stem-loop with SmpB. tmRNA is encoded by the ssrA gene; the 2 termini fold to resemble tRNA(Ala) and it encodes a 'tag peptide', a short internal open reading frame. During trans-translation Ala-aminoacylated tmRNA acts like a tRNA, entering the A-site of stalled ribosomes, displacing the stalled mRNA. The ribosome then switches to translate the ORF on the tmRNA; the nascent peptide is terminated with the 'tag peptide' encoded by the tmRNA and targeted for degradation. The ribosome is freed to recommence translation, which seems to be the essential function of trans-translation. This is SsrA-binding protein from Sphingopyxis alaskensis (strain DSM 13593 / LMG 18877 / RB2256) (Sphingomonas alaskensis).